Consider the following 165-residue polypeptide: Regulator of ribonuclease activity A (165 aa).

It belongs to the RraA family. In terms of assembly, homotrimer. Binds to both RNA-binding sites in the C-terminal region of Rne and to RhlB.

The protein localises to the cytoplasm. Its function is as follows. Globally modulates RNA abundance by binding to RNase E (Rne) and regulating its endonucleolytic activity. Can modulate Rne action in a substrate-dependent manner by altering the composition of the degradosome. Modulates RNA-binding and helicase activities of the degradosome. The chain is Regulator of ribonuclease activity A from Haemophilus ducreyi (strain 35000HP / ATCC 700724).